Consider the following 525-residue polypeptide: GMP synthase [glutamine-hydrolyzing] (525 aa).

One can recognise a Glutamine amidotransferase type-1 domain in the interval 9 to 207; that stretch reads RILILDFGSQ…VLDICQCEAL (199 aa). Cys-86 (nucleophile) is an active-site residue. Active-site residues include His-181 and Glu-183. The region spanning 208–400 is the GMPS ATP-PPase domain; it reads WTPAKIIDDA…LGLPYNMLYR (193 aa). 235–241 provides a ligand contact to ATP; the sequence is SGGVDSS.

As to quaternary structure, homodimer.

It carries out the reaction XMP + L-glutamine + ATP + H2O = GMP + L-glutamate + AMP + diphosphate + 2 H(+). It functions in the pathway purine metabolism; GMP biosynthesis; GMP from XMP (L-Gln route): step 1/1. Its function is as follows. Catalyzes the synthesis of GMP from XMP. The polypeptide is GMP synthase [glutamine-hydrolyzing] (Pectobacterium atrosepticum (strain SCRI 1043 / ATCC BAA-672) (Erwinia carotovora subsp. atroseptica)).